The primary structure comprises 396 residues: Calreticulin (396 aa).

Residues 1–15 form the signal peptide; the sequence is MKSLCLLAIVAVVSA. An intrachain disulfide couples Cys101 to Cys133. An alpha-D-glucoside-binding residues include Tyr105, Lys107, Tyr124, and Asp131. 7 tandem repeats follow at residues 186–197, 205–216, 222–233, 239–250, 254–264, 268–278, and 282–292. Residues 186-250 are 4 X approximate repeats; it reads AQTGSLEEDW…DAKKPEDWDD (65 aa). The segment at 193–301 is P-domain; sequence EDWDLLPAKK…PEYTPDDELY (109 aa). A compositionally biased stretch (basic and acidic residues) spans 202 to 212; sequence KIKDPDAKKPE. Residues 202 to 250 form a disordered region; sequence KIKDPDAKKPEDWDEREYIDDAEDVKPEDWEKPEHIPDPDAKKPEDWDD. The span at 213-224 shows a compositional bias: acidic residues; the sequence is DWDEREYIDDAE. Residues 225-246 show a composition bias toward basic and acidic residues; sequence DVKPEDWEKPEHIPDPDAKKPE. A 3 X approximate repeats region spans residues 254-292; that stretch reads GEWEPPMIDNPEYKGEWKPKQIKNPAYKGKWIHPEIENP. The tract at residues 302–396 is C-domain; it reads LYENWGAIGF…KEEEEGHDEL (95 aa). Asp312 serves as a coordination point for an alpha-D-glucoside. Over residues 342 to 380 the composition is skewed to basic and acidic residues; that stretch reads FDKLKTVEKEKKEKADEEARKVEEEARKKAEEEKEAKKD. A disordered region spans residues 342–396; it reads FDKLKTVEKEKKEKADEEARKVEEEARKKAEEEKEAKKDDDEEEEKEEEEGHDEL. Positions 381 to 396 are enriched in acidic residues; sequence DDEEEEKEEEEGHDEL. The short motif at 393 to 396 is the Prevents secretion from ER element; sequence HDEL.

This sequence belongs to the calreticulin family.

The protein resides in the endoplasmic reticulum lumen. In terms of biological role, molecular calcium-binding chaperone promoting folding, oligomeric assembly and quality control in the ER via the calreticulin/calnexin cycle. This lectin may interact transiently with almost all of the monoglucosylated glycoproteins that are synthesized in the ER. Probably by controlling the folding of extracellular matrix protein unc-52/Perlecan, may play a role in the formation of fibrous organelles, a hemidesmosome-like structure attaching muscles to the epidermis. Protects dopaminergic neurons against oxidative stress-induced neurodegeneration. The sequence is that of Calreticulin (crt-1) from Caenorhabditis briggsae.